The primary structure comprises 427 residues: Tol-Pal system protein TolB (427 aa).

Residues methionine 1–alanine 23 form the signal peptide.

It belongs to the TolB family. In terms of assembly, the Tol-Pal system is composed of five core proteins: the inner membrane proteins TolA, TolQ and TolR, the periplasmic protein TolB and the outer membrane protein Pal. They form a network linking the inner and outer membranes and the peptidoglycan layer.

Its subcellular location is the periplasm. Functionally, part of the Tol-Pal system, which plays a role in outer membrane invagination during cell division and is important for maintaining outer membrane integrity. The protein is Tol-Pal system protein TolB of Haemophilus influenzae (strain 86-028NP).